An 885-amino-acid chain; its full sequence is MKTTTAQPSPSTSDFSGHTPMMAQYLGLKANHPDTLLFYRMGDFYELFWADAEKAARLLDITLTQRGQSAGQPVVMCGVPFHAVDTYLARLIKLGESVAICEQVGEVGASKGPVERKVVRVVTPGTLTDSELLNDKSESLLLAVHAGTRNFCGLAWLSVTGAELRLAECPADALEAWIARIAPSELLYSAEVTPAFEQRLKAARAATPFTLSIRPAWQFDGGLGERKLSEQMGSNSLAAWNAESLANAHAAAAALLGYAEHTQGRALSHVQRLSVERDGDLVELPPTTRRNLELVQTLRGEDSPTLFSLLDTCMTGMGSRLLKRWLLSPRRDRGEAQARLEAIAALQSTVLGGTAAPWRTLREQLKNTSDVERIAARIALRQVRPRELLALRLALAKAEQLAPALPASGELLGGIIERLAPPSGCADLLASAIKPDPSALVRDGGVIATGHDAELDELRAISENCDDFLLKLEVSERERTGISNLRVQFNRVHGFYIEVTQSALSKVPDNYRRRQTLKNAERFITPELKAFEDKALSAQDRALAREKWLYEQLLDALQPSVPALTQLAGAIATLDALCALAERSHTLHWRAPSFVSHPCIEIQQGRHPVVEARLAEKSSGGFIANDTQLGPQQRMQVITGPNMGGKSTYMRQVAIIVLLASIGSHVPAAACRLGPIDAIHTRIGAADDLANAQSTFMLEMTEAAQILHSATAQSLVLMDEIGRGTSTFDGLALAAGIAAQLHDRSKAFTLFATHYFELTEFPATHHCAVNMHVSATEAGRDIVFLHEMQPGPASKSYGIQVARLAGMPAAVVNHARQALEALESQHAQTRAQVDLFAPPPAAETPMASAVESALAALDPDAMTPREALDALYALQKLNTRERGAA.

640-647 (GPNMGGKS) provides a ligand contact to ATP.

This sequence belongs to the DNA mismatch repair MutS family.

This protein is involved in the repair of mismatches in DNA. It is possible that it carries out the mismatch recognition step. This protein has a weak ATPase activity. The chain is DNA mismatch repair protein MutS from Variovorax paradoxus (strain S110).